We begin with the raw amino-acid sequence, 420 residues long: Glutamyl-tRNA reductase (420 aa).

Residues 49–52 (TCNR), S110, 115–117 (EHQ), and Q121 contribute to the substrate site. The Nucleophile role is filled by C50. Position 190–195 (190–195 (GSGTIN)) interacts with NADP(+).

Belongs to the glutamyl-tRNA reductase family. Homodimer.

The catalysed reaction is (S)-4-amino-5-oxopentanoate + tRNA(Glu) + NADP(+) = L-glutamyl-tRNA(Glu) + NADPH + H(+). Its pathway is porphyrin-containing compound metabolism; protoporphyrin-IX biosynthesis; 5-aminolevulinate from L-glutamyl-tRNA(Glu): step 1/2. Functionally, catalyzes the NADPH-dependent reduction of glutamyl-tRNA(Glu) to glutamate 1-semialdehyde (GSA). In Wigglesworthia glossinidia brevipalpis, this protein is Glutamyl-tRNA reductase.